Reading from the N-terminus, the 382-residue chain is MGGWSALAKLLGKVQAYSPAGGKVWLSVLFIFRILLLGTAVESAWGDEQSAFRCNTQQPGCENVCYDKSFPISHVRFWVLQIIFVSVPTLLYLAHVFYVMRKEEKLNKKEEELKVAQTDGANVDMHLKQIEIKKFKYGIEEHGKVKMRGGLLRTYIISILFKSVFEVAFLLIQWYIYGFSLSAVYTCKREPCPHQVDCFLSRPTEKTIFIIFMLVVSLVSLALNIIELFYVFFKGVKDRVKGQSDPYHATTGPLSPSKDCGSPEYAYFNGCSSPTAPLSPMSPPGYKLVTGDRNNSSCRNYNKQASEQNWANYSAEQNRMGQAGSTISNSHAQPFDFPDDNQNSKKLAAGHELQPLAIVDQRPSSRASSRASSRPRPDDLEI.

The Cytoplasmic portion of the chain corresponds to 2–23; sequence GGWSALAKLLGKVQAYSPAGGK. At serine 5 the chain carries Phosphoserine. The chain crosses the membrane as a helical span at residues 24-44; the sequence is VWLSVLFIFRILLLGTAVESA. Residues 45 to 76 lie on the Extracellular side of the membrane; sequence WGDEQSAFRCNTQQPGCENVCYDKSFPISHVR. 2 disulfides stabilise this stretch: cysteine 54–cysteine 192 and cysteine 187–cysteine 198. A helical membrane pass occupies residues 77–97; that stretch reads FWVLQIIFVSVPTLLYLAHVF. At 98-155 the chain is on the cytoplasmic side; that stretch reads YVMRKEEKLNKKEEELKVAQTDGANVDMHLKQIEIKKFKYGIEEHGKVKMRGGLLRTY. Residue lysine 144 forms a Glycyl lysine isopeptide (Lys-Gly) (interchain with G-Cter in SUMO) linkage. A helical transmembrane segment spans residues 156 to 176; that stretch reads IISILFKSVFEVAFLLIQWYI. At 177–207 the chain is on the extracellular side; it reads YGFSLSAVYTCKREPCPHQVDCFLSRPTEKT. A helical transmembrane segment spans residues 208–228; it reads IFIIFMLVVSLVSLALNIIEL. Topologically, residues 229–382 are cytoplasmic; that stretch reads FYVFFKGVKD…SRPRPDDLEI (154 aa). Lysine 237 participates in a covalent cross-link: Glycyl lysine isopeptide (Lys-Gly) (interchain with G-Cter in SUMO). An interaction with NOV region spans residues 244 to 382; that stretch reads SDPYHATTGP…SRPRPDDLEI (139 aa). Tyrosine 247 is subject to Phosphotyrosine. Phosphoserine occurs at positions 255, 257, and 262. Positions 264–382 are interaction with UBQLN4; it reads EYAYFNGCSS…SRPRPDDLEI (119 aa). Cysteine 271 is modified (S-nitrosocysteine). Threonine 275 is modified (phosphothreonine). A phosphoserine mark is found at serine 306 and serine 314. The segment covering 317-332 has biased composition (polar residues); it reads QNRMGQAGSTISNSHA. Residues 317 to 382 form a disordered region; the sequence is QNRMGQAGST…SRPRPDDLEI (66 aa). Serine 325 is subject to Phosphoserine; by CK1. Position 326 is a phosphothreonine (threonine 326). Phosphoserine; by CK1 is present on residues serine 328 and serine 330. 2 positions are modified to phosphoserine: serine 344 and serine 365. Residues 362–374 are compositionally biased toward low complexity; it reads RPSSRASSRASSR. Serine 368 carries the phosphoserine; by PKC/PRKCG and PKC/PRKCD modification. A phosphoserine mark is found at serine 369 and serine 373.

This sequence belongs to the connexin family. Alpha-type (group II) subfamily. A connexon is composed of a hexamer of connexins. Interacts with SGSM3. Interacts with RIC1/CIP150. Interacts with CNST and CSNK1D. Interacts (via C-terminus) with TJP1. Interacts (via C-terminus) with SRC (via SH3 domain). Interacts (not ubiquitinated) with UBQLN4 (via UBA domain). Interacts with NOV. Interacts with TMEM65. Interacts with ANK3/ANKG and PKP2. Post-translationally, phosphorylation at Ser-325, Ser-328 and Ser-330 by CK1 modulates gap junction assembly. Phosphorylated at Ser-368 by PRKCG; phosphorylation induces disassembly of gap junction plaques and inhibition of gap junction activity. Phosphorylation at Ser-368 by PRKCD triggers its internalization into small vesicles leading to proteasome-mediated degradation. Sumoylated with SUMO1, SUMO2 and SUMO3, which may regulate the level of functional Cx43 gap junctions at the plasma membrane. May be desumoylated by SENP1 or SENP2. In terms of processing, S-nitrosylation at Cys-271 is enriched at the muscle endothelial gap junction in arteries, it augments channel permeability and may regulate of smooth muscle cell to endothelial cell communication. Post-translationally, acetylated in the developing cortex; leading to delocalization from the cell membrane.

The protein localises to the cell membrane. Its subcellular location is the cell junction. It localises to the gap junction. It is found in the endoplasmic reticulum. Functionally, gap junction protein that acts as a regulator of bladder capacity. A gap junction consists of a cluster of closely packed pairs of transmembrane channels, the connexons, through which materials of low MW diffuse from one cell to a neighboring cell. May play a critical role in the physiology of hearing by participating in the recycling of potassium to the cochlear endolymph. Negative regulator of bladder functional capacity: acts by enhancing intercellular electrical and chemical transmission, thus sensitizing bladder muscles to cholinergic neural stimuli and causing them to contract. May play a role in cell growth inhibition through the regulation of NOV expression and localization. Plays an essential role in gap junction communication in the ventricles. This chain is Gap junction alpha-1 protein (GJA1), found in Canis lupus familiaris (Dog).